A 729-amino-acid polypeptide reads, in one-letter code: DNA topoisomerase 3 (729 aa).

A Toprim domain is found at 3 to 136 (KSVVIAEKPS…IKRLWISSVT (134 aa)). Positions 9 and 105 each coordinate Mg(2+). A Topo IA-type catalytic domain is found at 153–594 (YDNLYASAVA…EMKNYTKEIV (442 aa)). The interval 187 to 192 (NCGRVQ) is interaction with DNA. Residue Y310 is the O-(5'-phospho-DNA)-tyrosine intermediate of the active site. The segment covering 686-713 (ERRKKESGNKADKRDVQKYMKQQKKEEE) has biased composition (basic and acidic residues). A disordered region spans residues 686–718 (ERRKKESGNKADKRDVQKYMKQQKKEEEPLNNP).

Belongs to the type IA topoisomerase family. Mg(2+) is required as a cofactor.

The catalysed reaction is ATP-independent breakage of single-stranded DNA, followed by passage and rejoining.. Its function is as follows. Releases the supercoiling and torsional tension of DNA, which is introduced during the DNA replication and transcription, by transiently cleaving and rejoining one strand of the DNA duplex. Introduces a single-strand break via transesterification at a target site in duplex DNA. The scissile phosphodiester is attacked by the catalytic tyrosine of the enzyme, resulting in the formation of a DNA-(5'-phosphotyrosyl)-enzyme intermediate and the expulsion of a 3'-OH DNA strand. The free DNA strand then undergoes passage around the unbroken strand, thus removing DNA supercoils. Finally, in the religation step, the DNA 3'-OH attacks the covalent intermediate to expel the active-site tyrosine and restore the DNA phosphodiester backbone. This is DNA topoisomerase 3 from Bacillus cereus (strain ZK / E33L).